Here is a 507-residue protein sequence, read N- to C-terminus: Probable cytochrome P450 6a18 (507 aa).

Residue cysteine 451 coordinates heme.

It belongs to the cytochrome P450 family. Heme serves as cofactor.

The protein resides in the endoplasmic reticulum membrane. Its subcellular location is the microsome membrane. Functionally, may be involved in the metabolism of insect hormones and in the breakdown of synthetic insecticides. The chain is Probable cytochrome P450 6a18 (Cyp6a18) from Drosophila melanogaster (Fruit fly).